A 228-amino-acid polypeptide reads, in one-letter code: Prophenin-2 (228 aa).

The first 29 residues, 1–29, serve as a signal peptide directing secretion; sequence METQRASLCLGRWSLWLLLLALVVPSASA. A propeptide spanning residues 30–146 is cleaved from the precursor; sequence QALSYREAVL…FLRRPRLRRQ (117 aa). Intrachain disulfides connect Cys85/Cys96 and Cys107/Cys124. 7 tandem repeats follow at residues 148 to 157, 158 to 167, 168 to 177, 178 to 187, 188 to 197, 198 to 207, and 208 to 217. A 7 X 10 AA tandem repeats region spans residues 148–217; the sequence is FPPPNVPGPR…FPPPPPFRPP (70 aa). Disordered regions lie at residues 167–195 and 207–228; these read RFPPPNFPGPRFPPPNFPGPRFPPPNFPG and WFPPPPPFRPPPFGPPRFPGRR. Proline amide is present on Pro225. A propeptide spans 226-228 (removed in mature form); sequence GRR.

The protein belongs to the cathelicidin family.

It localises to the secreted. Functionally, exerts antimicrobial activity. It is more effective against Gram-negative bacteria than Gram-positive bacteria. This chain is Prophenin-2, found in Sus scrofa (Pig).